The following is a 469-amino-acid chain: MAQTLYDKLWNTHVVHTEDDGTALLYIDRQLLHEVTSPQAFEGLNVAHRPVWRISANLAVSDHNVPTTDRSHGIADPVSKLQVDTLDANCDAFGITQFKMNDLRQGIVHIIGPEQGATLPGMTIVCGDSHTSTHGAFGALAHGIGTSEVEHVLATQTLLQKKSKNMLVKVEGTLPRGCTAKDIVLAIIGKIGTAGGTGYAIEFGGSTIRALTMEGRMTVCNMAIEAGARAGMVAVDDTTIDYLKGRPFVPTGAEWDQAVEYWREFKSDEGAQFDRVVELNAAEIVPQVTWGTSPEMVTSIDARVPDPEREKDPVKREAMERALAYMALEPNTPMESINVDKIFIGSCTNARIEDIRAAAYVVKKLNRRIAPNVRLAMVVPGSGLVKAQAEREGLDKVFTDAGFEWREPGCSMCLAMNADRLEPGERCASTSNRNFEGRQGAGGRTHLVSPAMAAAAAIEGHFVDIRKLG.

3 residues coordinate [4Fe-4S] cluster: Cys347, Cys410, and Cys413.

The protein belongs to the aconitase/IPM isomerase family. LeuC type 1 subfamily. As to quaternary structure, heterodimer of LeuC and LeuD. Requires [4Fe-4S] cluster as cofactor.

The catalysed reaction is (2R,3S)-3-isopropylmalate = (2S)-2-isopropylmalate. The protein operates within amino-acid biosynthesis; L-leucine biosynthesis; L-leucine from 3-methyl-2-oxobutanoate: step 2/4. In terms of biological role, catalyzes the isomerization between 2-isopropylmalate and 3-isopropylmalate, via the formation of 2-isopropylmaleate. This Burkholderia vietnamiensis (strain G4 / LMG 22486) (Burkholderia cepacia (strain R1808)) protein is 3-isopropylmalate dehydratase large subunit.